A 71-amino-acid polypeptide reads, in one-letter code: Small ribosomal subunit protein bS21 (71 aa).

Belongs to the bacterial ribosomal protein bS21 family.

This Hahella chejuensis (strain KCTC 2396) protein is Small ribosomal subunit protein bS21.